The sequence spans 441 residues: Gamma-glutamyl phosphate reductase (441 aa).

It belongs to the gamma-glutamyl phosphate reductase family.

Its subcellular location is the cytoplasm. It carries out the reaction L-glutamate 5-semialdehyde + phosphate + NADP(+) = L-glutamyl 5-phosphate + NADPH + H(+). The protein operates within amino-acid biosynthesis; L-proline biosynthesis; L-glutamate 5-semialdehyde from L-glutamate: step 2/2. Its function is as follows. Catalyzes the NADPH-dependent reduction of L-glutamate 5-phosphate into L-glutamate 5-semialdehyde and phosphate. The product spontaneously undergoes cyclization to form 1-pyrroline-5-carboxylate. This is Gamma-glutamyl phosphate reductase from Hydrogenobaculum sp. (strain Y04AAS1).